We begin with the raw amino-acid sequence, 577 residues long: ABC transporter G family member 4 (577 aa).

An ABC transporter domain is found at Leu6–Ser248. Residue Gly48–Ser55 participates in ATP binding. Residues Thr299–Tyr509 enclose the ABC transmembrane type-2 domain. Transmembrane regions (helical) follow at residues Leu318–Leu338, Leu353–Ile373, Val400–Val420, Leu429–Phe449, Ile458–Phe478, Tyr487–Asn507, and Phe548–Leu568.

It belongs to the ABC transporter superfamily. ABCG family. Eye pigment precursor importer (TC 3.A.1.204) subfamily.

Its subcellular location is the membrane. In Arabidopsis thaliana (Mouse-ear cress), this protein is ABC transporter G family member 4 (ABCG4).